Here is a 225-residue protein sequence, read N- to C-terminus: PKHD-type hydroxylase YbiX (225 aa).

One can recognise a Fe2OG dioxygenase domain in the interval 78–177 (TLSTPLFNRY…RVASFMWIQS (100 aa)). Positions 96, 98, and 158 each coordinate Fe cation. Position 168 (R168) interacts with 2-oxoglutarate.

Fe(2+) is required as a cofactor. L-ascorbate serves as cofactor.

This chain is PKHD-type hydroxylase YbiX, found in Shigella flexneri serotype 5b (strain 8401).